The following is a 548-amino-acid chain: Synaptic vesicle 2-related protein (548 aa).

At 1 to 87 the chain is on the cytoplasmic side; it reads MEEDLFQLRQ…GFGKFQWKLS (87 aa). Residues Ser25 and Ser31 each carry the phosphoserine modification. Residues 88 to 108 form a helical membrane-spanning segment; sequence VLTGLAWMADAMEMMILSILA. Topologically, residues 109–122 are vesicular; it reads PQLHCEWRLPSWQV. The helical transmembrane segment at 123–143 threads the bilayer; it reads ALLTSVVFVGMMSSSTLWGNI. Residues 144–156 are Cytoplasmic-facing; sequence SDQYGRKTGLKIS. A helical membrane pass occupies residues 157 to 177; the sequence is VLWTLYYGILSAFAPVYSWIL. Residues 178–180 are Vesicular-facing; it reads VLR. Residues 181–201 traverse the membrane as a helical segment; that stretch reads GLVGFGIGGVPQSVTLYAEFL. At 202–209 the chain is on the cytoplasmic side; that stretch reads PMKARAKC. The helical transmembrane segment at 210-230 threads the bilayer; the sequence is ILLIEVFWAIGTVFEVVLAVF. At 231–238 the chain is on the vesicular side; it reads VMPSLGWR. The helical transmembrane segment at 239–259 threads the bilayer; the sequence is WLLILSAVPLLLFAVLCFWLP. The Cytoplasmic portion of the chain corresponds to 260–316; sequence ESARYDVLSGNQEKAIATLKRIATENGAPMPLGKLIISRQEDRGKMRDLFTPHFRWT. The chain crosses the membrane as a helical span at residues 317-337; sequence TLLLWFIWFSNAFSYYGLVLL. The Vesicular portion of the chain corresponds to 338–373; that stretch reads TTELFQAGDVCGISSRKKAVEAKCSLACEYLSEEDY. The chain crosses the membrane as a helical span at residues 374–394; sequence MDLLWTTLSEFPGVLVTLWII. Residues 395–401 lie on the Cytoplasmic side of the membrane; that stretch reads DRLGRKK. Residues 402 to 422 form a helical membrane-spanning segment; sequence TMALCFVIFSFCSLLLFICVG. The Vesicular portion of the chain corresponds to 423 to 424; it reads RN. Residues 425-445 traverse the membrane as a helical segment; that stretch reads VLTLLLFIARAFISGGFQAAY. The Cytoplasmic portion of the chain corresponds to 446–457; the sequence is VYTPEVYPTATR. Residues 458-478 form a helical membrane-spanning segment; the sequence is ALGLGTCSGMARVGALITPFI. The Vesicular portion of the chain corresponds to 479 to 489; the sequence is AQVMLESSVYL. Residues 490-510 traverse the membrane as a helical segment; sequence TLAVYSGCCLLAALASCFLPI. Topologically, residues 511 to 548 are cytoplasmic; that stretch reads ETKGRGLQESSHREWGQEMVGRGMHGADVTRSNSGSQE. Ser542 is subject to Phosphoserine.

The protein belongs to the major facilitator superfamily.

Its subcellular location is the cytoplasmic vesicle. The protein resides in the secretory vesicle. It localises to the synaptic vesicle membrane. The polypeptide is Synaptic vesicle 2-related protein (SVOP) (Pongo abelii (Sumatran orangutan)).